The chain runs to 265 residues: Type 1 encapsulin shell protein (265 aa).

Residues 79–81, Trp-87, and 90–94 contribute to the FMN site; these read RAT and DNLER. The segment at 184 to 189 is pore-forming loop; sequence EAGHYP. Position 235 (Glu-235) interacts with FMN.

The protein belongs to the encapsulin family. Family 1 subfamily. In terms of assembly, homomultimeric. This encapsulin nanocompartment is formed by 60 subunits; monomers form 12 pentamers which assemble to form shells. There are 12 pores where the pentamers meet as well as 3-fold axis channels and dimer channels; none are larger than 3-4 Angstroms in diameter. The N-terminus of the protein is inside the shell, the C-terminus is outside. Probably 3, 4 or 5 Flp cargo decamers bind inside the encapulin nanocompartment. FMN serves as cofactor.

It localises to the encapsulin nanocompartment. Its activity is regulated as follows. Proteolysis activated by calcium and cobalt. Functionally, shell component of a type 1 encapsulin nanocompartment. Assembles into proteinaceous shells 23-24 nm in diameter with 2-2.5 nm thick walls. Cargo protein Flp (ferritin-like protein, probably stores iron) is targeted to the interior via its C-terminal extension; empty intact shells can be isolated in the absence of cargo protein. Fe(2+) may be able to pass though the 5-fold and dimer channels in the protein shell. Its function is as follows. Protease that exhibits activity toward chymotrypsin and trypsin substrates. Probably does not have antibacterial activity. This Thermotoga maritima (strain ATCC 43589 / DSM 3109 / JCM 10099 / NBRC 100826 / MSB8) protein is Type 1 encapsulin shell protein.